The sequence spans 23 residues: Basic phospholipase A2 intermexin (23 aa).

It belongs to the phospholipase A2 family. Group II subfamily. Requires Ca(2+) as cofactor. In terms of processing, contains 7 disulfide bonds. As to expression, expressed by the venom gland.

It localises to the secreted. It carries out the reaction a 1,2-diacyl-sn-glycero-3-phosphocholine + H2O = a 1-acyl-sn-glycero-3-phosphocholine + a fatty acid + H(+). Functionally, snake venom phospholipase A2 (PLA2) that shows presynaptic neurotoxicity and low myotoxicity. PLA2 catalyzes the calcium-dependent hydrolysis of the 2-acyl groups in 3-sn-phosphoglycerides. The polypeptide is Basic phospholipase A2 intermexin (Gloydius intermedius (Central Asian pit viper)).